The sequence spans 225 residues: UPF0758 protein BAV2405 (225 aa).

An MPN domain is found at 103-225 (AMKHPEEVRR…ALSMAERGLI (123 aa)). Zn(2+) contacts are provided by H174, H176, and D187. Positions 174–187 (HNHPSGNPQPSAAD) match the JAMM motif motif.

Belongs to the UPF0758 family.

In Bordetella avium (strain 197N), this protein is UPF0758 protein BAV2405.